The following is a 274-amino-acid chain: Phosphatidylglycerol--prolipoprotein diacylglyceryl transferase (274 aa).

7 consecutive transmembrane segments (helical) span residues Leu22–Ala42, Leu61–Tyr81, Ile96–Trp116, Phe125–Ile145, Ser177–Trp197, Gly204–Val224, and Ile238–Val258. Position 144 (Arg144) interacts with a 1,2-diacyl-sn-glycero-3-phospho-(1'-sn-glycerol).

It belongs to the Lgt family.

It localises to the cell inner membrane. The catalysed reaction is L-cysteinyl-[prolipoprotein] + a 1,2-diacyl-sn-glycero-3-phospho-(1'-sn-glycerol) = an S-1,2-diacyl-sn-glyceryl-L-cysteinyl-[prolipoprotein] + sn-glycerol 1-phosphate + H(+). Its pathway is protein modification; lipoprotein biosynthesis (diacylglyceryl transfer). Catalyzes the transfer of the diacylglyceryl group from phosphatidylglycerol to the sulfhydryl group of the N-terminal cysteine of a prolipoprotein, the first step in the formation of mature lipoproteins. The polypeptide is Phosphatidylglycerol--prolipoprotein diacylglyceryl transferase (Aeromonas hydrophila subsp. hydrophila (strain ATCC 7966 / DSM 30187 / BCRC 13018 / CCUG 14551 / JCM 1027 / KCTC 2358 / NCIMB 9240 / NCTC 8049)).